Consider the following 413-residue polypeptide: Tryptophan synthase beta chain (413 aa).

Lys106 carries the post-translational modification N6-(pyridoxal phosphate)lysine.

It belongs to the TrpB family. In terms of assembly, tetramer of two alpha and two beta chains. The cofactor is pyridoxal 5'-phosphate.

It catalyses the reaction (1S,2R)-1-C-(indol-3-yl)glycerol 3-phosphate + L-serine = D-glyceraldehyde 3-phosphate + L-tryptophan + H2O. Its pathway is amino-acid biosynthesis; L-tryptophan biosynthesis; L-tryptophan from chorismate: step 5/5. In terms of biological role, the beta subunit is responsible for the synthesis of L-tryptophan from indole and L-serine. This is Tryptophan synthase beta chain from Methylobacterium radiotolerans (strain ATCC 27329 / DSM 1819 / JCM 2831 / NBRC 15690 / NCIMB 10815 / 0-1).